We begin with the raw amino-acid sequence, 97 residues long: Large ribosomal subunit protein bL21 (97 aa).

It belongs to the bacterial ribosomal protein bL21 family. As to quaternary structure, part of the 50S ribosomal subunit. Contacts protein L20.

Functionally, this protein binds to 23S rRNA in the presence of protein L20. In Persephonella marina (strain DSM 14350 / EX-H1), this protein is Large ribosomal subunit protein bL21.